A 312-amino-acid polypeptide reads, in one-letter code: Putative mitochondrial transporter UCP3 (312 aa).

Over 1–10 (MVGLKPSDVP) the chain is Mitochondrial intermembrane. Residues 11 to 32 (PTMAVKFLGAGTAACFADLVTF) form a helical membrane-spanning segment. Solcar repeat units follow at residues 11–105 (PTMA…VKQV), 114–206 (SSLT…LKEK), and 215–300 (DNFP…LKRA). The Mitochondrial matrix portion of the chain corresponds to 33-76 (PLDTAKVRLQIQGENQAVQTARLVQYRGVLGTILTMVRTEGPCS). A helical transmembrane segment spans residues 77-99 (PYNGLVAGLQRQMSFASIRIGLY). The Mitochondrial intermembrane portion of the chain corresponds to 100 to 119 (DSVKQVYTPKGADNSSLTTR). Residues 120–136 (ILAGCTTGAMAVTCAQP) traverse the membrane as a helical segment. Residues 137-183 (TDVVKVRFQASIHLGPSRSDRKYSGTMDAYRTIAREEGVRGLWKGTL) lie on the Mitochondrial matrix side of the membrane. The chain crosses the membrane as a helical span at residues 184–200 (PNIMRNAIVNCAEVVTY). Residues 201–217 (DILKEKLLDYHLLTDNF) are Mitochondrial intermembrane-facing. The helical transmembrane segment at 218-237 (PCHFVSAFGAGFCATVVASP) threads the bilayer. Over 238 to 271 (VDVVKTRYMNSPPGQYFSPLDCMIKMVAQEGPTA) the chain is Mitochondrial matrix. The chain crosses the membrane as a helical span at residues 272-294 (FYKGFTPSFLRLGSWNVVMFVTY). Residues 279–301 (SFLRLGSWNVVMFVTYEQLKRAL) are purine nucleotide binding. Over 295–312 (EQLKRALMKVQMLRESPF) the chain is Mitochondrial intermembrane.

It belongs to the mitochondrial carrier (TC 2.A.29) family. In terms of assembly, interacts with HAX1; the interaction is direct and calcium-dependent. As to expression, only in skeletal muscle and heart. Also expressed in white and brown adipose tissues. Is more expressed in glycolytic than in oxidative skeletal muscles.

Its subcellular location is the mitochondrion inner membrane. Its activity is regulated as follows. The proton transporter activity is activated by fatty acids (in vitro). The proton transporter activity is inhibited by ATP and ADP (in vitro). The effect of Ubiquinone/coenzyme Q10 on the proton transporter activity in reconstituted membranes is unclear (in vitro). Functionally, putative transmembrane transporter that plays a role in mitochondrial metabolism via an as yet unclear mechanism. Originally, this mitochondrial protein was thought to act as a proton transmembrane transporter from the mitochondrial intermembrane space into the matrix, causing proton leaks through the inner mitochondrial membrane, thereby uncoupling mitochondrial membrane potential generation from ATP synthesis. However, this function is controversial and uncoupling may not be the function, or at least not the main function, but rather a consequence of more conventional metabolite transporter activity. This is Putative mitochondrial transporter UCP3 from Homo sapiens (Human).